We begin with the raw amino-acid sequence, 321 residues long: Acyl-CoA 5-desaturase AL21 (321 aa).

2 helical membrane-spanning segments follow: residues 42-62 (IFHI…PFTF) and 64-84 (WSAF…GTTL). Fe cation contacts are provided by histidine 87, histidine 92, histidine 124, histidine 127, and histidine 128. The short motif at 87 to 92 (HRNLTH) is the Histidine box-1 element. Residues 124-128 (HRYHH) carry the Histidine box-2 motif. The chain crosses the membrane as a helical span at residues 190-210 (LQAALLYMFGGFPFIVWGMAV). Residues histidine 227, histidine 256, histidine 259, and histidine 260 each contribute to the Fe cation site. Positions 256–260 (HNNHH) match the Histidine box-3 motif.

This sequence belongs to the fatty acid desaturase type 1 family. It depends on Fe(2+) as a cofactor.

The protein resides in the membrane. It carries out the reaction (11Z,14Z)-eicosadienoyl-CoA + AH2 + O2 = (5Z,11Z,14Z)-eicosatrienoyl-CoA + A + 2 H2O. It catalyses the reaction (11Z,14Z,17Z)-eicosatrienoyl-CoA + AH2 + O2 = (5Z,11Z,14Z,17Z)-eicosatetraenoyl-CoA + A + 2 H2O. It participates in lipid metabolism; polyunsaturated fatty acid biosynthesis. Functionally, catalyzes the desaturation of 20:2Delta(11,14) and 20:3Delta(11,14,17) to generate sciadonic acid (20:3Delta(5,11,14)) and juniperonic acid (20:4Delta(5,11,14,17)). The enzyme can also use 16:0 and 18:0 as substrates. This is Acyl-CoA 5-desaturase AL21 from Anemone leveillei (Windflower).